A 162-amino-acid polypeptide reads, in one-letter code: Protein-export protein SecB (162 aa).

This sequence belongs to the SecB family. Homotetramer, a dimer of dimers. One homotetramer interacts with 1 SecA dimer.

It localises to the cytoplasm. Functionally, one of the proteins required for the normal export of preproteins out of the cell cytoplasm. It is a molecular chaperone that binds to a subset of precursor proteins, maintaining them in a translocation-competent state. It also specifically binds to its receptor SecA. This Pseudomonas syringae pv. syringae (strain B728a) protein is Protein-export protein SecB.